Consider the following 156-residue polypeptide: Peptide deformylase 1 (156 aa).

C90 and H132 together coordinate Fe cation. Residue E133 is part of the active site. H136 provides a ligand contact to Fe cation.

Belongs to the polypeptide deformylase family. Fe(2+) serves as cofactor.

It carries out the reaction N-terminal N-formyl-L-methionyl-[peptide] + H2O = N-terminal L-methionyl-[peptide] + formate. Removes the formyl group from the N-terminal Met of newly synthesized proteins. Requires at least a dipeptide for an efficient rate of reaction. N-terminal L-methionine is a prerequisite for activity but the enzyme has broad specificity at other positions. This is Peptide deformylase 1 from Bacillus anthracis.